A 1091-amino-acid chain; its full sequence is E3 ubiquitin-protein ligase TRIM33 (1091 aa).

Positions 1–13 are enriched in gly residues; it reads MADNKGGGGGGGE. The disordered stretch occupies residues 1-87; that stretch reads MADNKGGGGG…SATPASSSSS (87 aa). Residues 52–87 show a composition bias toward low complexity; the sequence is APVAAVPTDTPAEENPAPSSSSVASSSATPASSSSS. An RING-type 1 zinc finger spans residues 97–154; that stretch reads CAVCKLSLQSRDTEPKLLPCLHSFCRRCLPEPERQLSVPGGTNGDIQQVGVIRCLVCR. The B box-type 1; atypical zinc-finger motif lies at 180-227; the sequence is KSEQVCTSCEDNASAVGFCVECGEWLCKTCIEAHQRVKFTKDHIITNK. 8 residues coordinate Zn(2+): C185, C188, C209, H213, C245, H248, C268, and H273. A B box-type 2 zinc finger spans residues 240–281; it reads QRPVFCPVHKQEQLKLFCETCDRLTCRDCQLLEHKEHRYQFL. A coiled-coil region spans residues 269-361; the sequence is QLLEHKEHRY…QLESVTKERQ (93 aa). Disordered regions lie at residues 672-779 and 821-844; these read LPQP…TPPL and GKSA…GSNK. The span at 675-721 shows a compositional bias: low complexity; sequence PTSNMNPSPAPSAMSPGSTGLSNSHTPVRPPSTSSTGSRGSCGSSSR. Residues 754–763 show a composition bias toward basic and acidic residues; it reads KQEKAEDGRR. Residues 768–779 show a composition bias toward low complexity; it reads LSSPESSLTPPL. Residues 850–897 form a PHD-type zinc finger; the sequence is EDWCAVCQNGGDLLCCEKCPKVFHLTCHVPTLLSFPSGEWICTFCRDL. The Bromo domain occupies 920 to 1043; it reads GLSPVDQMKC…LYFEEKLPAI (124 aa). The interval 1051 to 1091 is disordered; the sequence is PLPEFEAEDDDGDVTDDSDDDDFVQPRRKRLKSEERPVHIK. Over residues 1055 to 1073 the composition is skewed to acidic residues; that stretch reads FEAEDDDGDVTDDSDDDDF. Positions 1082 to 1091 are enriched in basic and acidic residues; the sequence is KSEERPVHIK.

May interact with smad4.

The protein resides in the nucleus. It carries out the reaction S-ubiquitinyl-[E2 ubiquitin-conjugating enzyme]-L-cysteine + [acceptor protein]-L-lysine = [E2 ubiquitin-conjugating enzyme]-L-cysteine + N(6)-ubiquitinyl-[acceptor protein]-L-lysine.. The protein operates within protein modification; protein ubiquitination. Functionally, acts as an E3 ubiquitin-protein ligase for smad4. Promotes ectoderm embryonic development at the expense of other germ layers. Inhibits mesodermal differentiation. Promotes neural development of the ectoderm. Promotes smad4 alpha degradation via the ubiquitin proteasome pathway. May act as a transcriptional repressor. The sequence is that of E3 ubiquitin-protein ligase TRIM33 (trim33) from Xenopus laevis (African clawed frog).